Consider the following 150-residue polypeptide: Large ribosomal subunit protein bL9 (150 aa).

Belongs to the bacterial ribosomal protein bL9 family.

Its function is as follows. Binds to the 23S rRNA. The sequence is that of Large ribosomal subunit protein bL9 from Thioalkalivibrio sulfidiphilus (strain HL-EbGR7).